The following is a 336-amino-acid chain: Type II methyltransferase M.PvuII (336 aa).

2 repeat units span residues 11-113 (SNDM…IYNF) and 181-293 (SDRM…WISF). A disordered region spans residues 196–215 (TPKTRPSGHDIGKSFSKDNG). A compositionally biased stretch (basic and acidic residues) spans 202 to 211 (SGHDIGKSFS).

Belongs to the N(4)/N(6)-methyltransferase family. N(4) subfamily. Monomer.

The catalysed reaction is a 2'-deoxycytidine in DNA + S-adenosyl-L-methionine = an N(4)-methyl-2'-deoxycytidine in DNA + S-adenosyl-L-homocysteine + H(+). Its function is as follows. A beta subtype methylase, recognizes the double-stranded sequence 5'-CAGCTG-3', methylates C-4 on both strands, and protects the DNA from cleavage by the PvuII endonuclease. The chain is Type II methyltransferase M.PvuII from Proteus hauseri.